An 842-amino-acid chain; its full sequence is ATP-binding cassette sub-family B member 6 (842 aa).

The Lumenal portion of the chain corresponds to 1 to 26 (MVTVGNYCETEGPAGPAWTQNGLSPC). Positions 1-205 (MVTVGNYCET…SGGLFILGLW (205 aa)) are required for the lysosomal targeting. Residues 1-236 (MVTVGNYCET…GNQGRSTDRR (236 aa)) are required for ATPase activity. C8 and C26 are disulfide-bonded. Residues 27–47 (FFFTLVPSTLLTLGVLALVLV) form a helical membrane-spanning segment. The Cytoplasmic segment spans residues 48-72 (LPRRRREVPAGPEELSWAAGPRVAP). Residues 73 to 93 (YVLQLFLATLQMALPLAGLAG) form a helical membrane-spanning segment. The Lumenal portion of the chain corresponds to 94 to 106 (RVGTARGVRLPGY). A helical membrane pass occupies residues 107 to 127 (LLLASVLESLASVCGLWLLVV). Topologically, residues 128–147 (ERSQARQSLAMGVWMKFRHS) are cytoplasmic. A helical transmembrane segment spans residues 148–168 (LGLLLLWTVTFAAENLALVSW). Residues 169–185 (NSPQWWWARADLGQQVQ) are Lumenal-facing. The helical transmembrane segment at 186-206 (FGLWVLRYVTSGGLFILGLWA) threads the bilayer. Topologically, residues 207 to 263 (PGLRPQSYTLHVHEEDQDVGGNQGRSTDRRSTWRDLGRKLRLLSSYLWPRGSPSLQL) are cytoplasmic. A helical membrane pass occupies residues 264–284 (IVLICLGLMGLERALNVLVPI). Positions 265–556 (VLICLGLMGL…FGTYYRMIQT (292 aa)) constitute an ABC transmembrane type-1 domain. Over 285–291 (FYRDIVN) the chain is Lumenal. The helical transmembrane segment at 292 to 312 (LLTAKAPWSSLAWTVTTYVFL) threads the bilayer. Residues 313 to 375 (KFLQGGGTGS…TGEVLRIVDR (63 aa)) lie on the Cytoplasmic side of the membrane. The chain crosses the membrane as a helical span at residues 376–396 (GTSSVTGLLSYLVFSIIPTLA). Residue D397 is a topological domain, lumenal. A helical membrane pass occupies residues 398-418 (IIIGIIYFSMFFNAWFGLIVF). The Cytoplasmic segment spans residues 419-499 (LCMSLYLILT…STASLVVLNQ (81 aa)). Residues 500–520 (TQNLVIGLGLLAGSLLCAYFV) form a helical membrane-spanning segment. The Lumenal segment spans residues 521–529 (SEQKLQVGD). The helical transmembrane segment at 530 to 550 (FVLFGTYITQLYMPLNWFGTY) threads the bilayer. Over 551–842 (YRMIQTNFID…PEESKPQDTA (292 aa)) the chain is Cytoplasmic. An ABC transporter domain is found at 590–824 (IEFENVHFSY…GGVYAEMWQL (235 aa)). ATP is bound by residues Y599 and 623-634 (GPSGAGKSTILR).

Belongs to the ABC transporter superfamily. ABCB family. Heavy Metal importer (TC 3.A.1.210) subfamily. In terms of assembly, homodimer. N-glycosylated.

Its subcellular location is the cell membrane. The protein localises to the mitochondrion outer membrane. It localises to the endoplasmic reticulum membrane. The protein resides in the golgi apparatus membrane. It is found in the endosome membrane. Its subcellular location is the lysosome membrane. The protein localises to the late endosome membrane. It localises to the early endosome membrane. The protein resides in the secreted. It is found in the extracellular exosome. Its subcellular location is the mitochondrion. The protein localises to the endosome. It localises to the multivesicular body membrane. The protein resides in the melanosome membrane. The enzyme catalyses coproporphyrin III(in) + ATP + H2O = coproporphyrin III(out) + ADP + phosphate + H(+). It carries out the reaction coproporphyrinogen III(in) + ATP + H2O = coproporphyrinogen III(out) + ADP + phosphate + H(+). The catalysed reaction is heme b(in) + ATP + H2O = heme b(out) + ADP + phosphate + H(+). It catalyses the reaction pheophorbide a(in) + ATP + H2O = pheophorbide a(out) + ADP + phosphate + H(+). The enzyme catalyses protoporphyrin IX(in) + ATP + H2O = protoporphyrin IX(out) + ADP + phosphate + H(+). It carries out the reaction coproporphyrin I(in) + ATP + H2O = coproporphyrin I(out) + ADP + phosphate + H(+). The catalysed reaction is uroporphyrin I(in) + ATP + H2O = uroporphyrin I(out) + ADP + phosphate + H(+). It catalyses the reaction uroporphyrin III(in) + ATP + H2O = uroporphyrin III(out) + ADP + phosphate + H(+). Its function is as follows. ATP-dependent transporter that catalyzes the transport of a broad-spectrum of porphyrins from the cytoplasm to the extracellular space through the plasma membrane or into the vesicle lumen. May also function as an ATP-dependent importer of porphyrins from the cytoplasm into the mitochondria, in turn may participate in the de novo heme biosynthesis regulation and in the coordination of heme and iron homeostasis during phenylhydrazine stress. May play a key role in the early steps of melanogenesis producing PMEL amyloid fibrils. In vitro, it confers to cells a resistance to toxic metal such as arsenic and cadmium and against chemotherapeutics agent such as 5-fluorouracil, SN-38 and vincristin. In addition may play a role in the transition metal homeostasis. The protein is ATP-binding cassette sub-family B member 6 of Mus musculus (Mouse).